The following is a 716-amino-acid chain: Zinc finger protein on ecdysone puffs (716 aa).

2 disordered regions span residues 103–168 and 182–208; these read PSLL…GGIR and KNANQNKKKEPTPGEKKIESPTKESPY. A compositionally biased stretch (basic and acidic residues) spans 188 to 203; that stretch reads KKKEPTPGEKKIESPT. Position 201 is a phosphoserine (Ser-201). Thr-203 bears the Phosphothreonine mark. A Phosphoserine modification is found at Ser-206. Residues 216-240 form a C2H2-type 1 zinc finger; that stretch reads FYCHLCKKHMWDANSFENHIKGRTH. Residues 288–310 form a C2H2-type 2; atypical zinc finger; that stretch reads DYCTMCDLNFHGHISTHRKSEGH. Residues 319-343 form a C2H2-type 3 zinc finger; it reads PKCIECNKEFATRIDYDTHLLSAEH. Positions 350–359 are enriched in basic and acidic residues; sequence NNTKVGERKR. Positions 350 to 447 are disordered; the sequence is NNTKVGERKR…EEEEVALPVD (98 aa). The short motif at 379-383 is the Nuclear localization signal element; sequence KRKKK. The segment covering 386-401 has biased composition (basic and acidic residues); the sequence is KKEGEAADGEAKKEGA. Acidic residues predominate over residues 405-414; the sequence is EGAEGDEAEG. Basic and acidic residues predominate over residues 415 to 431; sequence EEAKEGEEAADETKEGD. Positions 432-447 are enriched in acidic residues; the sequence is ELNESQEEEEVALPVD. A C2H2-type 4 zinc finger spans residues 489–513; the sequence is YECSVCSKFFDTEVTAEIHSRTATH. Positions 534-716 are disordered; it reads RAAAALEENE…QRARGRYNRY (183 aa). Basic and acidic residues predominate over residues 541–551; sequence ENERKKRKVEE. The Nuclear localization signal signature appears at 544–548; sequence RKKRK. Residues 560-638 are compositionally biased toward acidic residues; the sequence is AAEETTEGAE…GQEGEQEPEP (79 aa). Positions 639-656 are enriched in pro residues; it reads EPAPVQTPAPAEPAPPAK. The segment covering 657–704 has biased composition (low complexity); the sequence is TPAKTPTKAAAPAAVASPAAAATSADASPSPAKKATPARAAAGAKATP. A phosphoserine mark is found at Ser-673, Ser-684, and Ser-686. Phosphothreonine is present on Thr-692. A compositionally biased stretch (basic residues) spans 707 to 716; that stretch reads QRARGRYNRY.

The protein localises to the nucleus. It is found in the chromosome. In terms of biological role, may play a role in the process of early and late gene activation, or possibly in RNA processing, for a defined set of developmentally regulated loci. This Drosophila melanogaster (Fruit fly) protein is Zinc finger protein on ecdysone puffs (Pep).